Reading from the N-terminus, the 97-residue chain is Carboxypeptidase inhibitor (97 aa).

A signal peptide spans 1–22 (MAATLPVFAVVFFAMVLASSQA).

The protein localises to the secreted. Functionally, potent competitive inhibitor of metallo-carboxypeptidases CPA1, CPA2, CPB, CPN, and TAF1a. Also inhibits human CPA4. Accelerates fibrinolysis in vitro and may contribute to the maintenance of host blood liquidity during feeding. The sequence is that of Carboxypeptidase inhibitor from Rhipicephalus bursa (Tick).